A 430-amino-acid polypeptide reads, in one-letter code: Asparagine--tRNA ligase (430 aa).

Belongs to the class-II aminoacyl-tRNA synthetase family. As to quaternary structure, homodimer.

The protein resides in the cytoplasm. The catalysed reaction is tRNA(Asn) + L-asparagine + ATP = L-asparaginyl-tRNA(Asn) + AMP + diphosphate + H(+). In Staphylococcus aureus (strain MSSA476), this protein is Asparagine--tRNA ligase.